The chain runs to 193 residues: Fibrillarin-like rRNA/tRNA 2'-O-methyltransferase (193 aa).

S-adenosyl-L-methionine contacts are provided by residues 82–83 (TT), 100–101 (EF), 125–126 (DA), and 145–148 (DVAQ).

Belongs to the methyltransferase superfamily. Fibrillarin family. In terms of assembly, interacts with nop5. Component of box C/D small ribonucleoprotein (sRNP) particles that contain rpl7ae, FlpA and nop5, plus a guide RNA.

In terms of biological role, involved in pre-rRNA and tRNA processing. Utilizes the methyl donor S-adenosyl-L-methionine to catalyze the site-specific 2'-hydroxyl methylation of ribose moieties in rRNA and tRNA. Site specificity is provided by a guide RNA that base pairs with the substrate. Methylation occurs at a characteristic distance from the sequence involved in base pairing with the guide RNA. This chain is Fibrillarin-like rRNA/tRNA 2'-O-methyltransferase, found in Methanosarcina mazei (Methanosarcina frisia).